The following is a 755-amino-acid chain: Kojibiose phosphorylase (755 aa).

333 to 334 (WD) is a binding site for substrate. Residue Glu473 is the Proton donor of the active site. A substrate-binding site is contributed by 573-574 (KQ).

This sequence belongs to the glycosyl hydrolase 65 family.

The catalysed reaction is kojibiose + phosphate = beta-D-glucose 1-phosphate + D-glucose. Functionally, in vitro catalyzes the phosphorolysis of D-kojibiose into beta-D-glucose 1-phosphate and D-glucose. No other disaccharides tested substitute for D-kojibiose. In the reverse direction disaccharides can be formed from beta-D-glucose 1-phosphate plus D-glucose, L-sorbose, D-sorbitol, L-iditol or 1,5-anhydro-D-glucitol, but with low efficiency. The beta-D-glucose 1-phosphate product is the substrate for YcjU (AC P77366), the next apparent enzyme in the putative biochemical pathway encoded in this locus (yjcM to ycjW). This is Kojibiose phosphorylase (ycjT) from Escherichia coli (strain K12).